The following is a 319-amino-acid chain: Ribosomal RNA small subunit methyltransferase H (319 aa).

Residues 38-40 (GGH), Asp-58, Phe-82, Asp-104, and Gln-111 contribute to the S-adenosyl-L-methionine site.

The protein belongs to the methyltransferase superfamily. RsmH family.

It localises to the cytoplasm. The catalysed reaction is cytidine(1402) in 16S rRNA + S-adenosyl-L-methionine = N(4)-methylcytidine(1402) in 16S rRNA + S-adenosyl-L-homocysteine + H(+). In terms of biological role, specifically methylates the N4 position of cytidine in position 1402 (C1402) of 16S rRNA. The protein is Ribosomal RNA small subunit methyltransferase H of Histophilus somni (strain 129Pt) (Haemophilus somnus).